The primary structure comprises 386 residues: TGF-beta-activated kinase 1 and MAP3K7-binding protein 1 (386 aa).

The PPM-type phosphatase domain maps to 22 to 327 (HSCRYSKQKN…EEMTVIYVKL (306 aa)).

Interacts with mom-4; the interaction enhances mom-4 kinase activity.

In terms of biological role, involved in the Wnt signaling pathway by regulating mom-4 kinase activity. The polypeptide is TGF-beta-activated kinase 1 and MAP3K7-binding protein 1 (Caenorhabditis elegans).